Here is a 415-residue protein sequence, read N- to C-terminus: Methylaspartate ammonia-lyase 2 (415 aa).

Q173 contributes to the (2S,3S)-3-methyl-L-aspartate binding site. The Mg(2+) site is built by D238, E273, and D307. Residue Q329 participates in (2S,3S)-3-methyl-L-aspartate binding. K331 serves as the catalytic Proton acceptor. Residue T360–C361 coordinates (2S,3S)-3-methyl-L-aspartate.

This sequence belongs to the methylaspartate ammonia-lyase family. Homodimer. Requires Mg(2+) as cofactor.

It catalyses the reaction (2S,3S)-3-methyl-L-aspartate = mesaconate + NH4(+). Its pathway is amino-acid degradation; L-glutamate degradation via mesaconate pathway; acetate and pyruvate from L-glutamate: step 2/4. In terms of biological role, involved in the methylaspartate cycle. Catalyzes the formation of the alpha,beta-unsaturated bond by the reversible anti elimination of ammonia from L-threo-beta-methylaspartate (L-threo-(2S,3S)-3-methylaspartate) to give mesaconate. The protein is Methylaspartate ammonia-lyase 2 of Carboxydothermus hydrogenoformans (strain ATCC BAA-161 / DSM 6008 / Z-2901).